We begin with the raw amino-acid sequence, 204 residues long: Urease accessory protein UreG (204 aa).

12 to 19 (GPVGSGKT) contributes to the GTP binding site.

Belongs to the SIMIBI class G3E GTPase family. UreG subfamily. In terms of assembly, homodimer. UreD, UreF and UreG form a complex that acts as a GTP-hydrolysis-dependent molecular chaperone, activating the urease apoprotein by helping to assemble the nickel containing metallocenter of UreC. The UreE protein probably delivers the nickel.

It is found in the cytoplasm. In terms of biological role, facilitates the functional incorporation of the urease nickel metallocenter. This process requires GTP hydrolysis, probably effectuated by UreG. The polypeptide is Urease accessory protein UreG (Stutzerimonas stutzeri (strain A1501) (Pseudomonas stutzeri)).